A 538-amino-acid polypeptide reads, in one-letter code: CTP synthase (538 aa).

The tract at residues 1 to 270 (MSRTKFIFVT…DEVVLKTMGM (270 aa)) is amidoligase domain. Serine 15 lines the CTP pocket. Serine 15 provides a ligand contact to UTP. Residue 16–21 (SLGKGV) coordinates ATP. Tyrosine 56 contacts L-glutamine. Aspartate 73 lines the ATP pocket. The Mg(2+) site is built by aspartate 73 and glutamate 143. CTP is bound by residues 150–152 (DIE), 190–195 (KTKPTQ), and lysine 226. Residues 190-195 (KTKPTQ) and lysine 226 each bind UTP. In terms of domain architecture, Glutamine amidotransferase type-1 spans 295 to 537 (QIAVVGKYIS…IRASVKYSKK (243 aa)). Residue glycine 357 participates in L-glutamine binding. The active-site Nucleophile; for glutamine hydrolysis is cysteine 384. L-glutamine contacts are provided by residues 385 to 388 (LGMQ), glutamate 408, and arginine 465. Active-site residues include histidine 510 and glutamate 512.

Belongs to the CTP synthase family. In terms of assembly, homotetramer.

It carries out the reaction UTP + L-glutamine + ATP + H2O = CTP + L-glutamate + ADP + phosphate + 2 H(+). It catalyses the reaction L-glutamine + H2O = L-glutamate + NH4(+). The enzyme catalyses UTP + NH4(+) + ATP = CTP + ADP + phosphate + 2 H(+). Its pathway is pyrimidine metabolism; CTP biosynthesis via de novo pathway; CTP from UDP: step 2/2. Allosterically activated by GTP, when glutamine is the substrate; GTP has no effect on the reaction when ammonia is the substrate. The allosteric effector GTP functions by stabilizing the protein conformation that binds the tetrahedral intermediate(s) formed during glutamine hydrolysis. Inhibited by the product CTP, via allosteric rather than competitive inhibition. In terms of biological role, catalyzes the ATP-dependent amination of UTP to CTP with either L-glutamine or ammonia as the source of nitrogen. Regulates intracellular CTP levels through interactions with the four ribonucleotide triphosphates. The protein is CTP synthase of Leptospira interrogans serogroup Icterohaemorrhagiae serovar copenhageni (strain Fiocruz L1-130).